Consider the following 330-residue polypeptide: Putative protein N-methyltransferase FAM86B2 (330 aa).

An N-acetylmethionine modification is found at M1. S-adenosyl-L-methionine is bound by residues W139, 165-167, W228, and A247; that span reads GSG.

It belongs to the class I-like SAM-binding methyltransferase superfamily. EEF2KMT family. In terms of assembly, interacts with EEF2KMT.

The polypeptide is Putative protein N-methyltransferase FAM86B2 (FAM86B2) (Homo sapiens (Human)).